We begin with the raw amino-acid sequence, 148 residues long: Flavodoxin (148 aa).

In terms of domain architecture, Flavodoxin-like spans 4 to 145; the sequence is VLIVYGSTTG…DVSAWAGRVV (142 aa).

This sequence belongs to the flavodoxin family. The cofactor is FMN.

In terms of biological role, low-potential electron donor to a number of redox enzymes. This chain is Flavodoxin, found in Nitratidesulfovibrio vulgaris (strain DSM 19637 / Miyazaki F) (Desulfovibrio vulgaris).